Reading from the N-terminus, the 163-residue chain is MERFIFAALLVVALSLSGTGADPQCLPGWSSSDGYCYKVFKEYKRWDDAEMFCRQEVEGGHLVSIHSKTEAKFLARLVFRKFILLNVWIGLSSPGKHGIWRWSDGSSFYYTSWAFGEPNNFLWNEYCVGLMSITGHRKWSDQNCRSKRYFICKAQPQSEGSTW.

Residues 1–21 (MERFIFAALLVVALSLSGTGA) form the signal peptide. Intrachain disulfides connect C25–C36, C53–C152, and C127–C144. Residues 32 to 153 (SDGYCYKVFK…CRSKRYFICK (122 aa)) form the C-type lectin domain. A Mannose-binding motif is present at residues 117–119 (EPN). Ca(2+)-binding residues include E125 and D141.

Belongs to the true venom lectin family. As to expression, expressed by the venom gland.

It is found in the secreted. Its function is as follows. Mannose-binding lectin which recognizes specific carbohydrate structures and agglutinates a variety of animal cells by binding to cell-surface glycoproteins and glycolipids. May be a calcium-dependent lectin. The protein is C-type lectin lectoxin-Lio2 of Erythrolamprus poecilogyrus (Water snake).